The sequence spans 123 residues: Small ribosomal subunit protein uS12cz/uS12cy (123 aa).

The protein belongs to the universal ribosomal protein uS12 family. In terms of assembly, part of the 30S ribosomal subunit.

It is found in the plastid. It localises to the chloroplast. Functionally, with S4 and S5 plays an important role in translational accuracy. Located at the interface of the 30S and 50S subunits. This Platanus occidentalis (Sycamore) protein is Small ribosomal subunit protein uS12cz/uS12cy (rps12-A).